A 74-amino-acid polypeptide reads, in one-letter code: Cytochrome c oxidase subunit 2 (74 aa).

The Mitochondrial intermembrane portion of the chain corresponds to 1 to 14 (MAHPMQLGFQDAAS). A helical transmembrane segment spans residues 15-45 (PVMEELLHFHDHALMIVFLISTAVLYIIVVT). The Mitochondrial matrix segment spans residues 46–74 (VTTKLTDKYVLDAQEIEMVWTIMPAVVLI).

It belongs to the cytochrome c oxidase subunit 2 family. Component of the cytochrome c oxidase (complex IV, CIV), a multisubunit enzyme composed of 14 subunits. The complex is composed of a catalytic core of 3 subunits MT-CO1, MT-CO2 and MT-CO3, encoded in the mitochondrial DNA, and 11 supernumerary subunits COX4I, COX5A, COX5B, COX6A, COX6B, COX6C, COX7A, COX7B, COX7C, COX8 and NDUFA4, which are encoded in the nuclear genome. The complex exists as a monomer or a dimer and forms supercomplexes (SCs) in the inner mitochondrial membrane with NADH-ubiquinone oxidoreductase (complex I, CI) and ubiquinol-cytochrome c oxidoreductase (cytochrome b-c1 complex, complex III, CIII), resulting in different assemblies (supercomplex SCI(1)III(2)IV(1) and megacomplex MCI(2)III(2)IV(2)). Found in a complex with TMEM177, COA6, COX18, COX20, SCO1 and SCO2. Interacts with TMEM177 in a COX20-dependent manner. Interacts with COX20. Interacts with COX16. Cu cation serves as cofactor.

The protein resides in the mitochondrion inner membrane. The catalysed reaction is 4 Fe(II)-[cytochrome c] + O2 + 8 H(+)(in) = 4 Fe(III)-[cytochrome c] + 2 H2O + 4 H(+)(out). Component of the cytochrome c oxidase, the last enzyme in the mitochondrial electron transport chain which drives oxidative phosphorylation. The respiratory chain contains 3 multisubunit complexes succinate dehydrogenase (complex II, CII), ubiquinol-cytochrome c oxidoreductase (cytochrome b-c1 complex, complex III, CIII) and cytochrome c oxidase (complex IV, CIV), that cooperate to transfer electrons derived from NADH and succinate to molecular oxygen, creating an electrochemical gradient over the inner membrane that drives transmembrane transport and the ATP synthase. Cytochrome c oxidase is the component of the respiratory chain that catalyzes the reduction of oxygen to water. Electrons originating from reduced cytochrome c in the intermembrane space (IMS) are transferred via the dinuclear copper A center (CU(A)) of subunit 2 and heme A of subunit 1 to the active site in subunit 1, a binuclear center (BNC) formed by heme A3 and copper B (CU(B)). The BNC reduces molecular oxygen to 2 water molecules using 4 electrons from cytochrome c in the IMS and 4 protons from the mitochondrial matrix. This chain is Cytochrome c oxidase subunit 2 (mt-co2), found in Amia calva (Bowfin).